The following is a 37-amino-acid chain: Large ribosomal subunit protein bL36 (37 aa).

It belongs to the bacterial ribosomal protein bL36 family.

This Pasteurella multocida (strain Pm70) protein is Large ribosomal subunit protein bL36.